Consider the following 236-residue polypeptide: Uridylate kinase (236 aa).

10–13 (KLSG) provides a ligand contact to ATP. G52 serves as a coordination point for UMP. Residues G53 and R57 each coordinate ATP. UMP-binding positions include D72 and 133–140 (TGNPFFTT). The ATP site is built by T160, Y166, and D169.

Belongs to the UMP kinase family. In terms of assembly, homohexamer.

It is found in the cytoplasm. It catalyses the reaction UMP + ATP = UDP + ADP. The protein operates within pyrimidine metabolism; CTP biosynthesis via de novo pathway; UDP from UMP (UMPK route): step 1/1. Inhibited by UTP. In terms of biological role, catalyzes the reversible phosphorylation of UMP to UDP. This is Uridylate kinase from Cupriavidus necator (strain ATCC 17699 / DSM 428 / KCTC 22496 / NCIMB 10442 / H16 / Stanier 337) (Ralstonia eutropha).